Here is a 295-residue protein sequence, read N- to C-terminus: Glutamyl-Q tRNA(Asp) synthetase (295 aa).

L-glutamate contacts are provided by residues 9–13 (RFAPT) and Glu45. The 'HIGH' region signature appears at 12-22 (PTPSGFLHFGS). Zn(2+) is bound by residues Cys101, Cys103, Tyr115, and Cys119. L-glutamate is bound by residues Tyr172 and Arg190. A 'KMSKS' region motif is present at residues 228 to 232 (KLGKS). Lys231 lines the ATP pocket.

It belongs to the class-I aminoacyl-tRNA synthetase family. GluQ subfamily. Zn(2+) is required as a cofactor.

Its function is as follows. Catalyzes the tRNA-independent activation of glutamate in presence of ATP and the subsequent transfer of glutamate onto a tRNA(Asp). Glutamate is transferred on the 2-amino-5-(4,5-dihydroxy-2-cyclopenten-1-yl) moiety of the queuosine in the wobble position of the QUC anticodon. The polypeptide is Glutamyl-Q tRNA(Asp) synthetase (Pseudomonas putida (strain GB-1)).